The chain runs to 339 residues: DNA-directed RNA polymerase subunit alpha (339 aa).

Positions 1-233 (MVREEVAGST…DLFLPFLHAE (233 aa)) are alpha N-terminal domain (alpha-NTD). The segment at 264–339 (KKGIPLNCIF…IDLLKNKLSF (76 aa)) is alpha C-terminal domain (alpha-CTD).

This sequence belongs to the RNA polymerase alpha chain family. As to quaternary structure, in plastids the minimal PEP RNA polymerase catalytic core is composed of four subunits: alpha, beta, beta', and beta''. When a (nuclear-encoded) sigma factor is associated with the core the holoenzyme is formed, which can initiate transcription.

Its subcellular location is the plastid. It localises to the chloroplast. It catalyses the reaction RNA(n) + a ribonucleoside 5'-triphosphate = RNA(n+1) + diphosphate. Functionally, DNA-dependent RNA polymerase catalyzes the transcription of DNA into RNA using the four ribonucleoside triphosphates as substrates. The chain is DNA-directed RNA polymerase subunit alpha from Crithopsis delileana.